The chain runs to 60 residues: Large ribosomal subunit protein bL33 (60 aa).

Belongs to the bacterial ribosomal protein bL33 family.

In Cytophaga hutchinsonii (strain ATCC 33406 / DSM 1761 / CIP 103989 / NBRC 15051 / NCIMB 9469 / D465), this protein is Large ribosomal subunit protein bL33.